Here is a 967-residue protein sequence, read N- to C-terminus: A disintegrin and metalloproteinase with thrombospondin motifs 1 (967 aa).

The signal sequence occupies residues 1–54; the sequence is MQPEVPLGSGKLKPCSDMGDIQRAAKFRSSQSAHMLLLLLASITMLLCVRGAHG. Residues 55 to 252 constitute a propeptide that is removed on maturation; it reads RPTEEDEELV…TGPGSIRKKR (198 aa). The disordered stretch occupies residues 198 to 252; sequence RGSGGAKCGVMDEETLPTSNSGRESQNTPDQWPLRNPTPQGAGKPTGPGSIRKKR. A Cysteine switch motif is present at residues 203 to 210; it reads AKCGVMDE. Cysteine 205 contributes to the Zn(2+) binding site. The span at 213 to 227 shows a compositional bias: polar residues; that stretch reads LPTSNSGRESQNTPD. One can recognise a Peptidase M12B domain in the interval 258-467; the sequence is RYVETMLVAD…GHGECLMDKP (210 aa). Residues glutamate 261, aspartate 344, and aspartate 351 each coordinate Ca(2+). Intrachain disulfides connect cysteine 333/cysteine 385, cysteine 362/cysteine 367, cysteine 379/cysteine 462, and cysteine 417/cysteine 446. Histidine 401 lines the Zn(2+) pocket. Residue glutamate 402 is part of the active site. Residues histidine 405 and histidine 411 each coordinate Zn(2+). Residues cysteine 462 and aspartate 465 each coordinate Ca(2+). Residues 476-558 enclose the Disintegrin domain; sequence DLPGTLYDAN…TDMKHFATPV (83 aa). Intrachain disulfides connect cysteine 488/cysteine 511, cysteine 499/cysteine 521, cysteine 506/cysteine 540, and cysteine 534/cysteine 545. Asparagine 547 carries N-linked (GlcNAc...) asparagine glycosylation. Residues 559-614 enclose the TSP type-1 1 domain; that stretch reads HGSWGPWGPWGDCSRTCGGGVQYTMRECDNPVPKNGGKYCEGKRVRYRSCNIEDCP. Disulfide bonds link cysteine 571-cysteine 608, cysteine 575-cysteine 613, and cysteine 586-cysteine 598. N-linked (GlcNAc...) asparagine glycosylation is found at asparagine 720, asparagine 764, and asparagine 782. The interval 725–857 is spacer; that stretch reads KKISGTVTST…PFNAIPTFSE (133 aa). TSP type-1 domains lie at 854–910 and 911–967; these read TFSE…LPCP and RWQV…TQCS. Asparagine 945 is a glycosylation site (N-linked (GlcNAc...) asparagine).

Zn(2+) is required as a cofactor. Post-translationally, the precursor is cleaved by a furin endopeptidase. Glycosylated. Can be O-fucosylated by POFUT2 on a serine or a threonine residue found within the consensus sequence C1-X(2)-(S/T)-C2-G of the TSP type-1 repeat domains where C1 and C2 are the first and second cysteine residue of the repeat, respectively. Fucosylated repeats can then be further glycosylated by the addition of a beta-1,3-glucose residue by the glucosyltransferase, B3GALTL. Fucosylation mediates the efficient secretion of ADAMTS family members. Can also be C-glycosylated with one or two mannose molecules on tryptophan residues within the consensus sequence W-X-X-W of the TPRs, and N-glycosylated. These other glycosylations can also facilitate secretion.

The protein resides in the secreted. It localises to the extracellular space. Its subcellular location is the extracellular matrix. Its function is as follows. Metalloprotease which cleaves aggrecan, a cartilage proteoglycan, at the '1683-Glu-|-Leu-1684' site (within the chondroitin sulfate attachment domain), and may be involved in its turnover. Also cleaves COMP. Has angiogenic inhibitor activity. May play a critical role in follicular rupture. This is A disintegrin and metalloproteinase with thrombospondin motifs 1 (Adamts1) from Rattus norvegicus (Rat).